We begin with the raw amino-acid sequence, 35 residues long: Photosystem II reaction center protein T (35 aa).

The chain crosses the membrane as a helical span at residues 3-23 (ALVYTFLLXSTLGIIFFAIFF).

The protein belongs to the PsbT family. PSII is composed of 1 copy each of membrane proteins PsbA, PsbB, PsbC, PsbD, PsbE, PsbF, PsbH, PsbI, PsbJ, PsbK, PsbL, PsbM, PsbT, PsbY, PsbZ, Psb30/Ycf12, at least 3 peripheral proteins of the oxygen-evolving complex and a large number of cofactors. It forms dimeric complexes.

It is found in the plastid. The protein resides in the chloroplast thylakoid membrane. Its function is as follows. Found at the monomer-monomer interface of the photosystem II (PS II) dimer, plays a role in assembly and dimerization of PSII. PSII is a light-driven water plastoquinone oxidoreductase, using light energy to abstract electrons from H(2)O, generating a proton gradient subsequently used for ATP formation. In Cunninghamia lanceolata (China fir), this protein is Photosystem II reaction center protein T.